We begin with the raw amino-acid sequence, 289 residues long: Beta-lactamase Toho-2 (289 aa).

The N-terminal stretch at 1 to 28 is a signal peptide; that stretch reads MVTKRVQRMMSAAAACIPLLLGSPTLYA. The Acyl-ester intermediate role is filled by S73. 235–237 provides a ligand contact to substrate; sequence KTG.

Belongs to the class-A beta-lactamase family.

The enzyme catalyses a beta-lactam + H2O = a substituted beta-amino acid. Its activity is regulated as follows. Inhibited 16-fold better by the beta-lactamase inhibitor tazobactam than by clavulanic acid. In terms of biological role, hydrolyzes beta-lactam antibiotics such as penicillin G, carbenicillin, cephaloridine, cefoxitin, cefotaxime, ceftazidime, and aztreonam. Has especially increased relative hydrolysis rates for cephalothin, cephaloridine, cefotaxime and ceftizoxime. The chain is Beta-lactamase Toho-2 (bla) from Escherichia coli.